The chain runs to 686 residues: UvrABC system protein C (686 aa).

The segment covering 1–14 (MVHDSTDDPDDTRV) has biased composition (basic and acidic residues). A disordered region spans residues 1 to 48 (MVHDSTDDPDDTRVRKSRRGTALDAPPQETAPPDLDPATTGGDDEDDA). Positions 81–160 (TSPGVYRMLN…IKQLRPRFNV (80 aa)) constitute a GIY-YIG domain. One can recognise a UVR domain in the interval 270–305 (HAVKQELAGEMEKAANELEFETAALYRDRLAALSAI).

The protein belongs to the UvrC family. Interacts with UvrB in an incision complex.

The protein resides in the cytoplasm. Its function is as follows. The UvrABC repair system catalyzes the recognition and processing of DNA lesions. UvrC both incises the 5' and 3' sides of the lesion. The N-terminal half is responsible for the 3' incision and the C-terminal half is responsible for the 5' incision. The polypeptide is UvrABC system protein C (Bradyrhizobium diazoefficiens (strain JCM 10833 / BCRC 13528 / IAM 13628 / NBRC 14792 / USDA 110)).